The sequence spans 101 residues: Small ribosomal subunit protein uS14 (101 aa).

The segment covering 1–10 has biased composition (basic and acidic residues); it reads MAKKSSIEKN. The interval 1 to 25 is disordered; the sequence is MAKKSSIEKNNRRKKMAKNAAPKRE.

The protein belongs to the universal ribosomal protein uS14 family. As to quaternary structure, part of the 30S ribosomal subunit. Contacts proteins S3 and S10.

In terms of biological role, binds 16S rRNA, required for the assembly of 30S particles and may also be responsible for determining the conformation of the 16S rRNA at the A site. This Rhodopseudomonas palustris (strain BisA53) protein is Small ribosomal subunit protein uS14.